A 261-amino-acid chain; its full sequence is Ribosomal RNA small subunit methyltransferase A (261 aa).

Residues histidine 13, leucine 15, glycine 40, glutamate 61, aspartate 85, and asparagine 105 each coordinate S-adenosyl-L-methionine.

Belongs to the class I-like SAM-binding methyltransferase superfamily. rRNA adenine N(6)-methyltransferase family. RsmA subfamily.

It is found in the cytoplasm. The enzyme catalyses adenosine(1518)/adenosine(1519) in 16S rRNA + 4 S-adenosyl-L-methionine = N(6)-dimethyladenosine(1518)/N(6)-dimethyladenosine(1519) in 16S rRNA + 4 S-adenosyl-L-homocysteine + 4 H(+). In terms of biological role, specifically dimethylates two adjacent adenosines (A1518 and A1519) in the loop of a conserved hairpin near the 3'-end of 16S rRNA in the 30S particle. May play a critical role in biogenesis of 30S subunits. In Flavobacterium johnsoniae (strain ATCC 17061 / DSM 2064 / JCM 8514 / BCRC 14874 / CCUG 350202 / NBRC 14942 / NCIMB 11054 / UW101) (Cytophaga johnsonae), this protein is Ribosomal RNA small subunit methyltransferase A.